Consider the following 156-residue polypeptide: Small ribosomal subunit protein uS7 (156 aa).

The protein belongs to the universal ribosomal protein uS7 family. As to quaternary structure, part of the 30S ribosomal subunit. Contacts proteins S9 and S11.

In terms of biological role, one of the primary rRNA binding proteins, it binds directly to 16S rRNA where it nucleates assembly of the head domain of the 30S subunit. Is located at the subunit interface close to the decoding center, probably blocks exit of the E-site tRNA. The polypeptide is Small ribosomal subunit protein uS7 (Salmonella choleraesuis (strain SC-B67)).